A 520-amino-acid chain; its full sequence is GMP synthase [glutamine-hydrolyzing] (520 aa).

The region spanning 9–202 (RVLIVDFGSQ…LFNIAGLKGD (194 aa)) is the Glutamine amidotransferase type-1 domain. The Nucleophile role is filled by cysteine 86. Active-site residues include histidine 176 and glutamate 178. Residues 203–395 (WTMAAFRQEM…LGLAPAFVGR (193 aa)) enclose the GMPS ATP-PPase domain. 230-236 (SGGVDSS) contacts ATP.

Homodimer.

The enzyme catalyses XMP + L-glutamine + ATP + H2O = GMP + L-glutamate + AMP + diphosphate + 2 H(+). The protein operates within purine metabolism; GMP biosynthesis; GMP from XMP (L-Gln route): step 1/1. Catalyzes the synthesis of GMP from XMP. This chain is GMP synthase [glutamine-hydrolyzing], found in Caulobacter vibrioides (strain ATCC 19089 / CIP 103742 / CB 15) (Caulobacter crescentus).